Consider the following 215-residue polypeptide: Thiamine-phosphate synthase (215 aa).

4-amino-2-methyl-5-(diphosphooxymethyl)pyrimidine-binding positions include 43 to 47 (QFRDK) and N78. Positions 79 and 98 each coordinate Mg(2+). S117 provides a ligand contact to 4-amino-2-methyl-5-(diphosphooxymethyl)pyrimidine. Position 143-145 (143-145 (TNS)) interacts with 2-[(2R,5Z)-2-carboxy-4-methylthiazol-5(2H)-ylidene]ethyl phosphate. Residue K146 participates in 4-amino-2-methyl-5-(diphosphooxymethyl)pyrimidine binding. 2-[(2R,5Z)-2-carboxy-4-methylthiazol-5(2H)-ylidene]ethyl phosphate-binding positions include G174 and 194–195 (IS).

It belongs to the thiamine-phosphate synthase family. It depends on Mg(2+) as a cofactor.

It carries out the reaction 2-[(2R,5Z)-2-carboxy-4-methylthiazol-5(2H)-ylidene]ethyl phosphate + 4-amino-2-methyl-5-(diphosphooxymethyl)pyrimidine + 2 H(+) = thiamine phosphate + CO2 + diphosphate. It catalyses the reaction 2-(2-carboxy-4-methylthiazol-5-yl)ethyl phosphate + 4-amino-2-methyl-5-(diphosphooxymethyl)pyrimidine + 2 H(+) = thiamine phosphate + CO2 + diphosphate. The enzyme catalyses 4-methyl-5-(2-phosphooxyethyl)-thiazole + 4-amino-2-methyl-5-(diphosphooxymethyl)pyrimidine + H(+) = thiamine phosphate + diphosphate. Its pathway is cofactor biosynthesis; thiamine diphosphate biosynthesis; thiamine phosphate from 4-amino-2-methyl-5-diphosphomethylpyrimidine and 4-methyl-5-(2-phosphoethyl)-thiazole: step 1/1. In terms of biological role, condenses 4-methyl-5-(beta-hydroxyethyl)thiazole monophosphate (THZ-P) and 2-methyl-4-amino-5-hydroxymethyl pyrimidine pyrophosphate (HMP-PP) to form thiamine monophosphate (TMP). This chain is Thiamine-phosphate synthase, found in Lactococcus lactis subsp. lactis (strain IL1403) (Streptococcus lactis).